Reading from the N-terminus, the 317-residue chain is Gluconeogenesis factor (317 aa).

It belongs to the gluconeogenesis factor family.

It is found in the cytoplasm. Its function is as follows. Required for morphogenesis under gluconeogenic growth conditions. Required, in gluconeogenic growth conditions, for the correct localization of PBP1 and hence for displaying a normal rod shape. The sequence is that of Gluconeogenesis factor (mgfK) from Bacillus subtilis (strain 168).